The chain runs to 429 residues: MQKNNLNFDKQHIWHPYASMIQPTPCILVKSAKGIILKLHNGKKLIDGMSSWWSTIHGYNHPRLNNALKNQINKMSHVMFGGITHYPAISLCKKLIEITPNSLTRIFLSDSGSVSIEIAIKMILQYWQSLGKNKVIFLTIKKSYHGDTFAAMSVCDPKNSFHQFYHNFLPINIFADNPKCSFDGLWNKKDIISFKKLIQKHKDVVAAVILEPIVQSVGGMKFYHPNYLKQVRFLCDLYKIPLILDEIATGFGRTGKFFAFEHSNIVPDVLCIGKAITGGTITLSATLTTDKIANVISNSASGCLMHGPTFMGNPLACAAAYENILILQENKWKIQVKNIETCLRTYLFPLKTHYEVYDVRVLGAIGVVECYHYINISMMQNYFVKNNVWIRPFRKLIYLVPAYIIDNASLKKLINVISNALNYENFFMK.

Position 52 (Trp52) interacts with substrate. 112–113 (GS) is a pyridoxal 5'-phosphate binding site. Residue Tyr144 coordinates substrate. Asp245 serves as a coordination point for pyridoxal 5'-phosphate. Residues Lys274 and Gly307 each contribute to the substrate site. Lys274 carries the post-translational modification N6-(pyridoxal phosphate)lysine. Residue 308 to 309 (PT) coordinates pyridoxal 5'-phosphate. Arg391 serves as a coordination point for substrate.

It belongs to the class-III pyridoxal-phosphate-dependent aminotransferase family. BioA subfamily. As to quaternary structure, homodimer. Requires pyridoxal 5'-phosphate as cofactor.

It localises to the cytoplasm. It carries out the reaction (8S)-8-amino-7-oxononanoate + S-adenosyl-L-methionine = S-adenosyl-4-methylsulfanyl-2-oxobutanoate + (7R,8S)-7,8-diammoniononanoate. It participates in cofactor biosynthesis; biotin biosynthesis; 7,8-diaminononanoate from 8-amino-7-oxononanoate (SAM route): step 1/1. Catalyzes the transfer of the alpha-amino group from S-adenosyl-L-methionine (SAM) to 7-keto-8-aminopelargonic acid (KAPA) to form 7,8-diaminopelargonic acid (DAPA). It is the only aminotransferase known to utilize SAM as an amino donor. This chain is Adenosylmethionine-8-amino-7-oxononanoate aminotransferase, found in Buchnera aphidicola subsp. Baizongia pistaciae (strain Bp).